Reading from the N-terminus, the 265-residue chain is Hydroxyethylthiazole kinase (265 aa).

Substrate is bound at residue M43. ATP is bound by residues K118 and T165. Position 192 (G192) interacts with substrate.

This sequence belongs to the Thz kinase family. It depends on Mg(2+) as a cofactor.

The catalysed reaction is 5-(2-hydroxyethyl)-4-methylthiazole + ATP = 4-methyl-5-(2-phosphooxyethyl)-thiazole + ADP + H(+). The protein operates within cofactor biosynthesis; thiamine diphosphate biosynthesis; 4-methyl-5-(2-phosphoethyl)-thiazole from 5-(2-hydroxyethyl)-4-methylthiazole: step 1/1. Functionally, catalyzes the phosphorylation of the hydroxyl group of 4-methyl-5-beta-hydroxyethylthiazole (THZ). The protein is Hydroxyethylthiazole kinase of Pyrococcus horikoshii (strain ATCC 700860 / DSM 12428 / JCM 9974 / NBRC 100139 / OT-3).